Here is a 451-residue protein sequence, read N- to C-terminus: Phosphoglucosamine mutase (451 aa).

Ser102 functions as the Phosphoserine intermediate in the catalytic mechanism. Residues Ser102, Asp243, Asp245, and Asp247 each coordinate Mg(2+). Position 102 is a phosphoserine (Ser102).

Belongs to the phosphohexose mutase family. The cofactor is Mg(2+). In terms of processing, activated by phosphorylation.

It carries out the reaction alpha-D-glucosamine 1-phosphate = D-glucosamine 6-phosphate. In terms of biological role, catalyzes the conversion of glucosamine-6-phosphate to glucosamine-1-phosphate. In Brucella abortus (strain 2308), this protein is Phosphoglucosamine mutase.